A 99-amino-acid polypeptide reads, in one-letter code: MVLAMLGALYPRAGLSLFLFYLILAGALLRPQPQRSQQSVPEEFSAPLELLQPLSGLVDDYGLRPKHPRPGGPRPLLSQAQQRKRDGPNMADYYYDVNL.

A helical membrane pass occupies residues 10-29; sequence YPRAGLSLFLFYLILAGALL. The segment at 60–90 is disordered; it reads DYGLRPKHPRPGGPRPLLSQAQQRKRDGPNM.

As to quaternary structure, interacts with SPPL2C (via active sites); the interaction stabilizes FREY1 protein and inhibits SPPL2C proteolytic activity. Interacts with IZUMO1; the interaction retains IZUMO1 at the endoplasmic reticulum membrane and coordinates IZUMO1 complex assembly. Expressed in round spermatids (at protein level).

It localises to the endoplasmic reticulum membrane. Its function is as follows. Key regulator for male fertility expressed transiently in round spermatids where it recruits IZUMO1 at the endoplasmic reticulum (ER) membrane and coordinates the oolemmal binding multimeric complex (IZUMO1 complex) assembly. Upon complete assembly of the IZUMO1 complex, its ER retention is released, facilitating IZUMO1 complex export to the acrosome. Through the interaction with SPPL2C, inhibits its intramembrane protease activity directly accessing the catalytic center of an I-CLiP. The protein is Protein Frey of Mus musculus (Mouse).